A 196-amino-acid polypeptide reads, in one-letter code: Putative HTH-type transcriptional regulator protein PtxE (196 aa).

The region spanning 1 to 59 (MLNPVWLKSLVAIVQTGSFQSAARALGLAQPTVSQHLQKLEEQVGVTLVQRSRSGCQPT) is the HTH lysR-type domain. Residues 19–38 (FQSAARALGLAQPTVSQHLQ) constitute a DNA-binding region (H-T-H motif).

This sequence belongs to the LysR transcriptional regulatory family.

The protein is Putative HTH-type transcriptional regulator protein PtxE (ptxE) of Stutzerimonas stutzeri (Pseudomonas stutzeri).